Here is a 787-residue protein sequence, read N- to C-terminus: MASDAFMQTACPADAAEQLEAEHAEWAQLGCGAVPPPPAAASRPSRAAVAAYVGEVVDRMRAQSRADERVYVKCGQLVHLRVRARSVPLDDWLTSAELALVSEVAEPVRANRAFVEVSLRYFELTEYATLRALGLQSALKYEEMYLAKLEGGAIESMGQFFVRIAATAATWTMREPAFGRALVGEGATWCAVFNAYLTALYRQLVVPATPIMLFAGRARGSLASCYLLNPQVSSSTEAVEAITTEVARILLNRGGIGISFQSFDRAVSRDCKRGIMGALKLLDSMAMAINSDSERPTGICVYLEPWHCDVRAVLNMRGLLARDESTRCDNLFSCLWVPDLLFDRYLAHLEGREGVVWTLFDDRASHLSRLHGPAFTAEYERLEREGLGVETVPVQDLAFLIVRSIVMTGSPFVMFKDACNRHYHMDTAGDALTGSNLCTEIVQRASPDAHGVCNLASVNLPRCVREGEGGALAFDFAALSTAAATAAIFVNAMMLGGQYPTEKAARGVARHRSLGIGFQGLHTLLLELGMDMLSPAARRLNVEIAERLLLAVMATSATLCEYGCAPFEDFARSKFARGLMPFDGYEGVVLSLPRAWARLREKVARHGLYNAQFVALMPTVSSSQVTEGSEGFSPVFTNMFSKVTMSGELLRPNLPLMRALRKHFTREASRLGAVRALDREQWSVAAALGDLAPGHPLAKFKTAFEYDQERLIDLCADRAPFVDQSQSMSLFVTEPMDGKVPASQIMNLLVYAYKKGLKTGLYYCKIRKATNNGVFTGGDLVCSGCHL.

Substrate contacts are provided by residues T209, 224-225 (SC), G255, 436-440 (NLCTE), and 618-622 (PTVSS). Residues C225 and C453 are joined by a disulfide bond. N436 (proton acceptor) is an active-site residue. The Cysteine radical intermediate role is filled by C438. The active-site Proton acceptor is the E440.

It belongs to the ribonucleoside diphosphate reductase large chain family. As to quaternary structure, heterotetramer composed of a homodimer of the large subunit (R1) and a homodimer of the small subunit (R2). Larger multisubunit protein complex are also active, composed of (R1)n(R2)n.

It carries out the reaction a 2'-deoxyribonucleoside 5'-diphosphate + [thioredoxin]-disulfide + H2O = a ribonucleoside 5'-diphosphate + [thioredoxin]-dithiol. Ribonucleoside-diphosphate reductase holoenzyme provides the precursors necessary for viral DNA synthesis. Allows virus growth in non-dividing cells, as well as reactivation from latency in infected hosts. Catalyzes the biosynthesis of deoxyribonucleotides from the corresponding ribonucleotides. In Bos taurus (Bovine), this protein is Ribonucleoside-diphosphate reductase large subunit.